The following is a 187-amino-acid chain: MTEEIDFILDSTKESMEGSIAHLEKEFLNIRAGKASPAMLGSVFVDYYGSATPLSQVAKISVPDARTITLQPFEKNMLQVIEKAIMIANIGFNPMNNGDVIIISVPPLTEERRRELAKQAKTEAEDAKIGVRNVRKDSNSDIKKLEKEGTSEDACKIAEESVQKLTDSFIRKVDELLVVKEAEIMKV.

Belongs to the RRF family.

It is found in the cytoplasm. In terms of biological role, responsible for the release of ribosomes from messenger RNA at the termination of protein biosynthesis. May increase the efficiency of translation by recycling ribosomes from one round of translation to another. This is Ribosome-recycling factor from Flavobacterium psychrophilum (strain ATCC 49511 / DSM 21280 / CIP 103535 / JIP02/86).